Here is a 278-residue protein sequence, read N- to C-terminus: MWPFPSRSLFPPPTQAWLQTVSSDPEAQGWGAWNETKEILGPEGGEGKEEKEEEEDAEEDQDGDAGFLLSLLEQENLAECPLPDQELEAIKMKVCAMEQAEGTPRPPGVQQQAEEEEGTAAGQLLSPETVGCPLSGTPEEKVEADHRSVYVGNVDYGGSAEELEAHFSRCGEVHRVTILCDKFSGHPKGYAYIEFATKGSVQAAVELDQSLFRGRVIKVLPKRTNFPGISSTDRGGLRGHPGSRGAPFPHSGLQGRPRLRPQGQNRARGKFSPWFSPY.

Disordered regions lie at residues 21–66 (VSSD…GDAG) and 101–128 (EGTPRPPGVQQQAEEEEGTAAGQLLSPE). Residues 35–50 (ETKEILGPEGGEGKEE) are compositionally biased toward basic and acidic residues. Over residues 51–63 (KEEEEDAEEDQDG) the composition is skewed to acidic residues. In terms of domain architecture, RRM spans 147–224 (RSVYVGNVDY…RVIKVLPKRT (78 aa)). Positions 227–278 (PGISSTDRGGLRGHPGSRGAPFPHSGLQGRPRLRPQGQNRARGKFSPWFSPY) are disordered.

Expressed in various adult tissues.

The protein resides in the cytoplasm. In terms of biological role, binds the poly(A) tail of mRNA. The sequence is that of Embryonic polyadenylate-binding protein 2 (PABPN1L) from Homo sapiens (Human).